The following is a 191-amino-acid chain: MAP6 domain-containing protein 1 (191 aa).

Residues cysteine 5, cysteine 10, and cysteine 11 are each lipidated (S-palmitoyl cysteine). Positions 31–106 (HGYSDPGSEE…RGQSSAPPTR (76 aa)) are disordered. A phosphoserine mark is found at serine 38 and serine 41. Mn stretches follow at residues 123–136 (TTSY…WTGV) and 158–170 (DPSP…VPEV). A Phosphoserine modification is found at serine 160.

Belongs to the STOP family. As to quaternary structure, interacts with calmodulin. Post-translationally, palmitoylated. Palmitoylation enhances association with microtubules. In terms of tissue distribution, expressed in brain. Found in neurons in primary cultures, but absent in glial cells.

Its subcellular location is the golgi apparatus. The protein resides in the cytoplasm. It localises to the cytoskeleton. May have microtubule-stabilizing activity. This chain is MAP6 domain-containing protein 1 (Map6d1), found in Mus musculus (Mouse).